The sequence spans 305 residues: Homoserine O-acetyltransferase (305 aa).

The active-site Acyl-thioester intermediate is the Cys-142. Substrate contacts are provided by Lys-163 and Ser-192. His-235 (proton acceptor) is an active-site residue. The active site involves Glu-237. Arg-249 contributes to the substrate binding site.

Belongs to the MetA family.

It localises to the cytoplasm. The catalysed reaction is L-homoserine + acetyl-CoA = O-acetyl-L-homoserine + CoA. It functions in the pathway amino-acid biosynthesis; L-methionine biosynthesis via de novo pathway; O-acetyl-L-homoserine from L-homoserine: step 1/1. In terms of biological role, transfers an acetyl group from acetyl-CoA to L-homoserine, forming acetyl-L-homoserine. The sequence is that of Homoserine O-acetyltransferase from Phocaeicola vulgatus (strain ATCC 8482 / DSM 1447 / JCM 5826 / CCUG 4940 / NBRC 14291 / NCTC 11154) (Bacteroides vulgatus).